We begin with the raw amino-acid sequence, 247 residues long: PHD finger protein ALFIN-LIKE 3 (247 aa).

Residues 147-178 form a disordered region; the sequence is DRSGVDSSGKSKHSTKRTGEGQVKRSRVVAEE. A PHD-type zinc finger spans residues 188–240; sequence ETFCGTCGGLYNANEFWIGCDICERWFHGKCVRITPAKAEHIKHYKCPDCSSS.

This sequence belongs to the Alfin family. As to quaternary structure, interacts with H3K4me3 and to a lesser extent with H3K4me2.

Its subcellular location is the nucleus. In terms of biological role, histone-binding component that specifically recognizes H3 tails trimethylated on 'Lys-4' (H3K4me3), which mark transcription start sites of virtually all active genes. The chain is PHD finger protein ALFIN-LIKE 3 from Oryza sativa subsp. indica (Rice).